We begin with the raw amino-acid sequence, 152 residues long: uncharacterized protein (152 aa).

This is an uncharacterized protein from Brachyspira hyodysenteriae (Treponema hyodysenteriae).